Reading from the N-terminus, the 146-residue chain is Anti-sigma F factor (146 aa).

Belongs to the anti-sigma-factor family.

It catalyses the reaction L-seryl-[protein] + ATP = O-phospho-L-seryl-[protein] + ADP + H(+). It carries out the reaction L-threonyl-[protein] + ATP = O-phospho-L-threonyl-[protein] + ADP + H(+). In terms of biological role, binds to sigma F and blocks its ability to form an RNA polymerase holoenzyme (E-sigma F). Phosphorylates SpoIIAA on a serine residue. This phosphorylation may enable SpoIIAA to act as an anti-anti-sigma factor that counteracts SpoIIAB and thus releases sigma F from inhibition. The sequence is that of Anti-sigma F factor from Bacillus licheniformis (strain ATCC 14580 / DSM 13 / JCM 2505 / CCUG 7422 / NBRC 12200 / NCIMB 9375 / NCTC 10341 / NRRL NRS-1264 / Gibson 46).